Reading from the N-terminus, the 359-residue chain is Small ribosomal subunit biogenesis GTPase RsgA (359 aa).

Residues 101-259 (KRKGSQAIAS…LMDNPGIREV (159 aa)) form the CP-type G domain. GTP-binding positions include 149–152 (NKKD) and 201–209 (GSSGAGKST). Residues cysteine 284, cysteine 289, histidine 291, and cysteine 297 each coordinate Zn(2+). The segment at 331–359 (DPEEARKKKQKDKQMSKALQKRLKDKGRK) is disordered. A compositionally biased stretch (basic residues) spans 349-359 (LQKRLKDKGRK).

This sequence belongs to the TRAFAC class YlqF/YawG GTPase family. RsgA subfamily. Monomer. Associates with 30S ribosomal subunit, binds 16S rRNA. Requires Zn(2+) as cofactor.

Its subcellular location is the cytoplasm. Its function is as follows. One of several proteins that assist in the late maturation steps of the functional core of the 30S ribosomal subunit. Helps release RbfA from mature subunits. May play a role in the assembly of ribosomal proteins into the subunit. Circularly permuted GTPase that catalyzes slow GTP hydrolysis, GTPase activity is stimulated by the 30S ribosomal subunit. This is Small ribosomal subunit biogenesis GTPase RsgA from Leptospira interrogans serogroup Icterohaemorrhagiae serovar Lai (strain 56601).